The primary structure comprises 359 residues: Beta-hexosaminidase (359 aa).

Residues aspartate 64, arginine 72, arginine 138, and 168-169 each bind substrate; that span reads KH. The active-site Proton donor/acceptor is the histidine 181. Catalysis depends on aspartate 252, which acts as the Nucleophile.

The protein belongs to the glycosyl hydrolase 3 family. NagZ subfamily.

Its subcellular location is the cytoplasm. It catalyses the reaction Hydrolysis of terminal non-reducing N-acetyl-D-hexosamine residues in N-acetyl-beta-D-hexosaminides.. It participates in cell wall biogenesis; peptidoglycan recycling. Its function is as follows. Plays a role in peptidoglycan recycling by cleaving the terminal beta-1,4-linked N-acetylglucosamine (GlcNAc) from peptide-linked peptidoglycan fragments, giving rise to free GlcNAc, anhydro-N-acetylmuramic acid and anhydro-N-acetylmuramic acid-linked peptides. This chain is Beta-hexosaminidase, found in Thiobacillus denitrificans (strain ATCC 25259 / T1).